Reading from the N-terminus, the 817-residue chain is MSIREVIMDYLENSSKKALSVEELSVALHMNKAKDYKVFVKTLASLEAEHLLNFTAKGKVELAEKEEAKVVISGIFRANAAGFGFVSIDAEEPDVFVARGQTAFALDGDEVFIEIDKNANALKGTSAEGHVVEIIRHDVHQVVGTFVALNDDEKEQTGLIGFVKSRNKKIPYRVYLENEGLIPENKAIVRVEITHYPDKEFPQTMQGLVTEIIGQADDQGIDVLEVLASMDIVSEFPKEVLDQAEAVPEEVPENEIVGRVDYRNEITFTIDGADAKDLDDAVHAKRLENGNYELGVHIADVSHYVTENSPLDKEAYERGTSVYVTDRVVPMLPERLSNGICSLNPRINRLTQSCVMEISPEGRVINYQISQSIIKTTERMTYDAVNQMIAGDEAALENYAKIADSVKIMVELHHILEAMRKRRGAIDFDTVEAKIIVNEKGLPIEIRKRTRGIAERMIESFMLEANETVATHFEAHGLPFIYRIHEQPKADRLQRFIDFAATFGMQIEGTSNGIDQKVLQAFMKKIKGQPGEMVLSTMLLRSMQQARYSENNEGHFGLAAENYTHFTSPIRRYPDLLVHRLIREIGEGKTPANILQKWEDKIPEIAEHSSHRERRAVDAEREVEKMKKAEFMEEHVGEEYEGIIASVTRFGMFIELENTIEGLVHISTLKGDYFNYQERMLALIGERSGLTFKIGQPIKIKVVKADRMTGEIDFEYLPSELDLIDKAAKAKKKPDHKGRKKSNQSLKVKSVAPKSTDKSANKSKNGRRADEKFEFDKKKKKSAKKPFYSKAAKGKFTDKKDNGKKFTDGRKKPHKRG.

Residues 259-584 enclose the RNB domain; it reads RVDYRNEITF…DLLVHRLIRE (326 aa). The S1 motif domain maps to 637–717; that stretch reads GEEYEGIIAS…MTGEIDFEYL (81 aa). Positions 728-817 are disordered; the sequence is AKAKKKPDHK…DGRKKPHKRG (90 aa). The span at 729–742 shows a compositional bias: basic residues; it reads KAKKKPDHKGRKKS. Basic and acidic residues-rich tracts occupy residues 767-777 and 795-810; these read RRADEKFEFDK and KFTD…TDGR.

This sequence belongs to the RNR ribonuclease family. RNase R subfamily.

The protein resides in the cytoplasm. The catalysed reaction is Exonucleolytic cleavage in the 3'- to 5'-direction to yield nucleoside 5'-phosphates.. Functionally, 3'-5' exoribonuclease that releases 5'-nucleoside monophosphates and is involved in maturation of structured RNAs. The chain is Ribonuclease R 1 (rnr1) from Lactococcus lactis subsp. lactis (strain IL1403) (Streptococcus lactis).